Reading from the N-terminus, the 416-residue chain is Phosphoglycerate kinase (416 aa).

Residues Val-23, Asp-24, Phe-25, Asn-26, Gln-38, Arg-39, Ser-62, His-63, Gly-65, Arg-66, Leu-121, Arg-122, His-168, and Arg-169 each contribute to the (2R)-3-phosphoglycerate site. ADP is bound at residue Gly-212. Residue Gly-212 participates in CDP binding. Residues Ala-213 and Lys-214 each contribute to the AMP site. ATP is bound at residue Ala-213. Ala-213 lines the Mg(2+) pocket. Asp-217 is a binding site for CDP. Asp-217 contributes to the Mg(2+) binding site. Lys-218 is a binding site for AMP. An ATP-binding site is contributed by Lys-218. ADP is bound at residue Gly-236. A CDP-binding site is contributed by Gly-236. 2 residues coordinate AMP: Gly-237 and Gly-311. Residues Gly-237 and Gly-311 each contribute to the ATP site. Residues Gly-336 and Phe-341 each coordinate CDP. Residue Phe-341 participates in ADP binding. Position 342 (Glu-342) interacts with AMP. Glu-342, Asp-373, and Thr-374 together coordinate ATP. Mg(2+) is bound at residue Asp-373.

It belongs to the phosphoglycerate kinase family. In terms of assembly, monomer. Requires Mg(2+) as cofactor.

The protein localises to the cytoplasm. The protein resides in the mitochondrion. The enzyme catalyses (2R)-3-phosphoglycerate + ATP = (2R)-3-phospho-glyceroyl phosphate + ADP. Its pathway is carbohydrate degradation; glycolysis; pyruvate from D-glyceraldehyde 3-phosphate: step 2/5. In terms of biological role, catalyzes one of the two ATP producing reactions in the glycolytic pathway via the reversible conversion of 1,3-diphosphoglycerate to 3-phosphoglycerate. Both L- and D- forms of purine and pyrimidine nucleotides can be used as substrates, but the activity is much lower on pyrimidines. Negatively regulates the biosynthesis of acetyl-CoA from pyruvate in the mitochondrion. The protein is Phosphoglycerate kinase (PGK1) of Komagataella pastoris (Yeast).